A 265-amino-acid polypeptide reads, in one-letter code: NAD kinase (265 aa).

The Proton acceptor role is filled by aspartate 45. Residues 45-46 (DG), 121-122 (NE), arginine 147, aspartate 149, alanine 184, and glutamine 221 each bind NAD(+).

This sequence belongs to the NAD kinase family. The cofactor is a divalent metal cation.

The protein resides in the cytoplasm. The enzyme catalyses NAD(+) + ATP = ADP + NADP(+) + H(+). Functionally, involved in the regulation of the intracellular balance of NAD and NADP, and is a key enzyme in the biosynthesis of NADP. Catalyzes specifically the phosphorylation on 2'-hydroxyl of the adenosine moiety of NAD to yield NADP. The chain is NAD kinase from Leuconostoc citreum (strain KM20).